Reading from the N-terminus, the 443-residue chain is Thymidine phosphorylase (443 aa).

This sequence belongs to the thymidine/pyrimidine-nucleoside phosphorylase family. In terms of assembly, homodimer.

It catalyses the reaction thymidine + phosphate = 2-deoxy-alpha-D-ribose 1-phosphate + thymine. Its pathway is pyrimidine metabolism; dTMP biosynthesis via salvage pathway; dTMP from thymine: step 1/2. Functionally, the enzymes which catalyze the reversible phosphorolysis of pyrimidine nucleosides are involved in the degradation of these compounds and in their utilization as carbon and energy sources, or in the rescue of pyrimidine bases for nucleotide synthesis. The polypeptide is Thymidine phosphorylase (Aliivibrio salmonicida (strain LFI1238) (Vibrio salmonicida (strain LFI1238))).